The sequence spans 306 residues: Acetyl-coenzyme A carboxylase carboxyl transferase subunit beta (306 aa).

A CoA carboxyltransferase N-terminal domain is found at 25-294 (LWIKDPTSGE…APEPSHAFSK (270 aa)). Residues 287–306 (EPSHAFSKDSQTQISKTKAA) are disordered. Polar residues predominate over residues 294 to 306 (KDSQTQISKTKAA).

It belongs to the AccD/PCCB family. In terms of assembly, acetyl-CoA carboxylase is a heterohexamer composed of biotin carboxyl carrier protein (AccB), biotin carboxylase (AccC) and two subunits each of ACCase subunit alpha (AccA) and ACCase subunit beta (AccD).

The protein localises to the cytoplasm. The enzyme catalyses N(6)-carboxybiotinyl-L-lysyl-[protein] + acetyl-CoA = N(6)-biotinyl-L-lysyl-[protein] + malonyl-CoA. It functions in the pathway lipid metabolism; malonyl-CoA biosynthesis; malonyl-CoA from acetyl-CoA: step 1/1. In terms of biological role, component of the acetyl coenzyme A carboxylase (ACC) complex. Biotin carboxylase (BC) catalyzes the carboxylation of biotin on its carrier protein (BCCP) and then the CO(2) group is transferred by the transcarboxylase to acetyl-CoA to form malonyl-CoA. This is Acetyl-coenzyme A carboxylase carboxyl transferase subunit beta from Bartonella bacilliformis (strain ATCC 35685 / KC583 / Herrer 020/F12,63).